The chain runs to 1409 residues: Tensin-2 (1409 aa).

The segment at 1 to 35 (MKSSGPVERLLRALGRRDSSRAASRPRKAEPHSFR) is disordered. Basic and acidic residues predominate over residues 9–20 (RLLRALGRRDSS). Residues 31–79 (PHSFREKVFRKKPPVCAVCKVTIDGTGVSCRVCKVATHRKCEAKVTSAC) form a Phorbol-ester/DAG-type zinc finger. Thr91 is modified (phosphothreonine). 2 positions are modified to phosphoserine: Ser118 and Ser120. One can recognise a Phosphatase tensin-type domain in the interval 122–294 (DPLMERRWDL…SYFSGLLSGS (173 aa)). The active-site Phosphocysteine intermediate is Cys231. Residues 299 to 425 (SSPLFLHYVL…ASVEFVFSSS (127 aa)) form the C2 tensin-type domain. Ser455 bears the Phosphoserine mark. At Tyr456 the chain carries Phosphotyrosine. The disordered stretch occupies residues 462–536 (HHEDSVDGSL…SPGRPPPTAA (75 aa)). Phosphoserine is present on Ser466. Thr474 bears the Phosphothreonine mark. Ser481 carries the phosphoserine modification. A Phosphotyrosine modification is found at Tyr483. Over residues 491–506 (RQTPPAPSPEPPPPPM) the composition is skewed to pro residues. Residue Arg555 is modified to Omega-N-methylarginine. Disordered stretches follow at residues 562–582 (AILD…GVYP), 812–1098 (PGEG…SSPA), and 1111–1130 (LSDN…QSNV). Residues Ser820, Ser825, Ser830, Ser832, Ser835, and Ser845 each carry the phosphoserine modification. Composition is skewed to polar residues over residues 900–918 (SASS…SSPV) and 930–940 (RSPTSAPTQRL). Thr910 is subject to Phosphothreonine. 3 positions are modified to phosphoserine: Ser931, Ser941, and Ser972. Residues 968–982 (PLAPSPVSPTFPPSS) are compositionally biased toward pro residues. Thr977 carries the post-translational modification Phosphothreonine. Residues Ser991 and Ser1003 each carry the phosphoserine modification. Residues 1046-1056 (PEPPQSSPTPA) show a composition bias toward pro residues. Residues 1140–1247 (WYKPHLSRDQ…SLPCCLRIPS (108 aa)) form the SH2 domain. A Phosphothreonine modification is found at Thr1182. Ser1247 is subject to Phosphoserine. Residues 1275-1408 (ACSVLYLTSV…FITKVLLGQR (134 aa)) form the PTB domain.

It belongs to the PTEN phosphatase protein family. Interacts with AXL. Interacts with SYK; leading to its phosphorylation. Interacts with SQSTM1 (via PB1 domain); the interaction leads to sequestration of TNS2 in cytoplasmic aggregates with SQSTM1 and promotes TNS2 ubiquitination and proteasomal degradation. In terms of processing, ubiquitinated following sequestration in cytoplasmic aggregates with SQSTM1, leading to proteasomal degradation. Detected in heart, kidney, brain, thymus, spleen, liver, placenta, lung, skeletal muscle and small intestine.

Its subcellular location is the cell junction. The protein localises to the focal adhesion. It localises to the cell membrane. It is found in the cytoplasm. The enzyme catalyses O-phospho-L-tyrosyl-[protein] + H2O = L-tyrosyl-[protein] + phosphate. In terms of biological role, tyrosine-protein phosphatase which regulates cell motility, proliferation and muscle-response to insulin. Phosphatase activity is mediated by binding to phosphatidylinositol-3,4,5-triphosphate (PtdIns(3,4,5)P3) via the SH2 domain. In muscles and under catabolic conditions, dephosphorylates IRS1 leading to its degradation and muscle atrophy. Negatively regulates PI3K-AKT pathway activation. Dephosphorylates nephrin NPHS1 in podocytes which regulates activity of the mTORC1 complex. Under normal glucose conditions, NPHS1 outcompetes IRS1 for binding to phosphatidylinositol 3-kinase (PI3K) which balances mTORC1 activity but high glucose conditions lead to up-regulation of TNS2, increased NPHS1 dephosphorylation and activation of mTORC1, contributing to podocyte hypertrophy and proteinuria. Required for correct podocyte morphology, podocyte-glomerular basement membrane interaction and integrity of the glomerular filtration barrier. Enhances RHOA activation in the presence of DLC1. Plays a role in promoting DLC1-dependent remodeling of the extracellular matrix. This is Tensin-2 (TNS2) from Homo sapiens (Human).